The primary structure comprises 542 residues: MFCYQCEQTAKGEGCTKIGVCGKQPEVADLQDLLLYALKGLALHAVEGAKVGVNDHETNVFTCEALFSTLTNVNFDPARFQVLIPRVVEYREKLKAKVKAAGGKVDFADPAATFTPAKTLEGLVAQGANVGLKSEPELPPDIVSLKHTLLFGLKGISAYADHANILGQHDDAVYAFIYEALAATLRKDIELGDWLKLVLKCGEMNLRTMELLDAANTGVYGHPVPTSVPLGPKQGKAILVSGHDLKDLEELLKQTEGKGINIYTHGEMLPTHGYPGLKKYAHFYGHYGTAWQNQQKEFSKFPGAILMTTNCIQKPQQAYTGNIFTTGLVGWPDVPHVTNRDFSPVIERALALPGFPETVNGKSVMVGFGRNTILGVADKVIEAVKNKNIRHFFLVAGCDGAKPGRNYYTEFVEKVPKDCVVLTLACGKFRFFDKDLGTIGGLPRLMDVGQCNDAYSAIQVAVALAKAFNCGVNDLPLSLVLSWYEQKAVAILLTLLYLGIRNIRLGPSLPAFVSGNVLDVLVKNFDIKPITTPDEDLKAILG.

Positions 3, 6, 15, and 21 each coordinate [4Fe-4S] cluster. Hybrid [4Fe-2O-2S] cluster contacts are provided by His243, Glu267, Cys311, Cys398, Cys426, Cys451, Glu485, and Lys487. A Cysteine persulfide modification is found at Cys398.

Belongs to the HCP family. The cofactor is [4Fe-4S] cluster. Hybrid [4Fe-2O-2S] cluster is required as a cofactor.

It localises to the cytoplasm. It carries out the reaction A + NH4(+) + H2O = hydroxylamine + AH2 + H(+). Catalyzes the reduction of hydroxylamine to form NH(3) and H(2)O. This is Hydroxylamine reductase from Syntrophobacter fumaroxidans (strain DSM 10017 / MPOB).